Reading from the N-terminus, the 106-residue chain is Large ribosomal subunit protein uL23 (106 aa).

The protein belongs to the universal ribosomal protein uL23 family. Part of the 50S ribosomal subunit. Contacts protein L29, and trigger factor when it is bound to the ribosome.

Functionally, one of the early assembly proteins it binds 23S rRNA. One of the proteins that surrounds the polypeptide exit tunnel on the outside of the ribosome. Forms the main docking site for trigger factor binding to the ribosome. In Acinetobacter baumannii (strain SDF), this protein is Large ribosomal subunit protein uL23.